Consider the following 172-residue polypeptide: Large ribosomal subunit protein uL10 (172 aa).

This sequence belongs to the universal ribosomal protein uL10 family. In terms of assembly, part of the ribosomal stalk of the 50S ribosomal subunit. The N-terminus interacts with L11 and the large rRNA to form the base of the stalk. The C-terminus forms an elongated spine to which L12 dimers bind in a sequential fashion forming a multimeric L10(L12)X complex.

Forms part of the ribosomal stalk, playing a central role in the interaction of the ribosome with GTP-bound translation factors. In Rhizobium johnstonii (strain DSM 114642 / LMG 32736 / 3841) (Rhizobium leguminosarum bv. viciae), this protein is Large ribosomal subunit protein uL10.